We begin with the raw amino-acid sequence, 799 residues long: ATP synthase subunit alpha (799 aa).

Positions 1–549 (MTDNKNHSLI…EEVSLKPTTE (549 aa)) are ATP synthase alpha chain. 170–177 (GDRQTGKT) contributes to the ATP binding site. The unknown stretch occupies residues 550–799 (TSEAVQIEEK…KGPSGFTYLK (250 aa)).

This sequence belongs to the ATPase alpha/beta chains family. As to quaternary structure, F-type ATPases have 2 components, CF(1) - the catalytic core - and CF(0) - the membrane proton channel. CF(1) has five subunits: alpha(3), beta(3), gamma(1), delta(1), epsilon(1). CF(0) has three main subunits: a(1), b(2) and c(9-12). The alpha and beta chains form an alternating ring which encloses part of the gamma chain. CF(1) is attached to CF(0) by a central stalk formed by the gamma and epsilon chains, while a peripheral stalk is formed by the delta and b chains.

The protein resides in the cell membrane. The catalysed reaction is ATP + H2O + 4 H(+)(in) = ADP + phosphate + 5 H(+)(out). Its function is as follows. Produces ATP from ADP in the presence of a proton gradient across the membrane. The alpha chain is a regulatory subunit. The protein is ATP synthase subunit alpha (atpA) of Ureaplasma parvum serovar 3 (strain ATCC 27815 / 27 / NCTC 11736).